The following is a 925-amino-acid chain: Nuclear factor of activated T-cells, cytoplasmic 2 (925 aa).

The tract at residues Met1–Gln95 is disordered. Phosphoserine is present on Ser23. A 9aaTAD motif is present at residues Asp26–Phe34. Residues Ser99, Ser107, and Ser110 each carry the phosphoserine modification. Residues Pro111 to Thr116 are calcineurin-binding. The tract at residues His119–Asp199 is transactivation domain A (TAD-A). Residues Ser148, Ser168, Ser171, Ser172, Ser174, Ser175, Ser177, and Ser180 each carry the phosphoserine modification. The required for cytoplasmic retention of the phosphorylated form stretch occupies residues Tyr161–Ser175. 2 repeat units span residues Ser184–Asp200 and Ser213–Asp229. A 3 X approximate SP repeats region spans residues Ser184–Gln286. A disordered region spans residues Asn195–Val297. Phosphoserine occurs at positions 213, 217, 221, 236, and 243. A compositionally biased stretch (polar residues) spans Pro214–Thr224. The short motif at Lys251–Arg253 is the Nuclear localization signal element. Phosphoserine occurs at positions 255, 268, 274, 276, 280, 326, 330, and 363. Residues Pro264 to Ser281 show a composition bias toward low complexity. The stretch at Ser272–Gln286 is one 3; approximate repeat. The 183-residue stretch at Ala392–Ala574 folds into the RHD domain. The DNA-binding element occupies Arg421 to Gly428. The Nuclear localization signal motif lies at Lys664–Lys666. Phosphoserine occurs at positions 755, 757, 759, 856, and 859. A disordered region spans residues Pro839–Ile894. Polar residues predominate over residues Thr862 to Ala874. Positions Tyr904 to Arg913 match the Nuclear export signal motif.

As to quaternary structure, member of the multicomponent NFATC transcription complex that consists of at least two components, a pre-existing cytoplasmic component NFATC2 and an inducible nuclear component NFATC1. Other members such as NFATC4, NFATC3 or members of the activating protein-1 family, MAF, GATA4 and Cbp/p300 can also bind the complex. The phosphorylated form specifically interacts with XPO1; which mediates nuclear export. NFATC proteins bind to DNA as monomers. Interacts with NFATC2IP. Interacts with FOXP3. Interacts with TBX21 ('Thr-303' phosphorylated form). Interacts with KAT2A. Interacts with HOMER2 and HOMER3; this interaction competes with calcineurin/PPP3CA-binding and hence prevents NFATC2 dephosphorylation and activation. Interacts with protein phosphatase PPP3CA/calcineurin A. Interacts with AKAP5 (via leucine zipper domain); this is required for NFATC2/NFAT1 recruitment to CRAC channels. In resting cells, phosphorylated by NFATC-kinase on at least 18 sites in the 99-363 region. Upon cell stimulation, all these sites except Ser-243 are dephosphorylated by calcineurin. Dephosphorylation induces a conformational change that simultaneously exposes an NLS and masks an NES, which results in nuclear localization. Simultaneously, Ser-53 or Ser-56 is phosphorylated; which is required for full transcriptional activity. Post-translationally, ubiquitinated in endothelial cells by RNF213 downstream of the non-canonical Wnt signaling pathway, leading to its degradation by the proteasome. In terms of tissue distribution, expressed in thymus, spleen, heart, testis, brain, placenta, muscle and pancreas. Isoform 1 is highly expressed in the small intestine, heart, testis, prostate, thymus, placenta and thyroid. Isoform 3 is highly expressed in stomach, uterus, placenta, trachea and thyroid.

The protein resides in the cytoplasm. The protein localises to the nucleus. In terms of biological role, plays a role in the inducible expression of cytokine genes in T-cells, especially in the induction of the IL-2, IL-3, IL-4, TNF-alpha or GM-CSF. Promotes invasive migration through the activation of GPC6 expression and WNT5A signaling pathway. Is involved in the negative regulation of chondrogenesis. Recruited by AKAP5 to ORAI1 pore-forming subunit of CRAC channels in Ca(2+) signaling microdomains where store-operated Ca(2+) influx is coupled to calmodulin and calcineurin signaling and activation of NFAT-dependent transcriptional responses. This is Nuclear factor of activated T-cells, cytoplasmic 2 (NFATC2) from Homo sapiens (Human).